The primary structure comprises 488 residues: Acetyl-coenzyme A carboxylase carboxyl transferase subunit beta, chloroplastic (488 aa).

Residues 224–488 (LWIQCDNCYG…FFPLNKNEIK (265 aa)) form the CoA carboxyltransferase N-terminal domain. Residues C228, C231, C244, and C247 each coordinate Zn(2+). A C4-type zinc finger spans residues 228 to 247 (CDNCYGLMYKKVEMNVCEEC).

The protein belongs to the AccD/PCCB family. As to quaternary structure, acetyl-CoA carboxylase is a heterohexamer composed of biotin carboxyl carrier protein, biotin carboxylase and 2 subunits each of ACCase subunit alpha and ACCase plastid-coded subunit beta (accD). Zn(2+) serves as cofactor.

The protein resides in the plastid. It localises to the chloroplast stroma. The catalysed reaction is N(6)-carboxybiotinyl-L-lysyl-[protein] + acetyl-CoA = N(6)-biotinyl-L-lysyl-[protein] + malonyl-CoA. It participates in lipid metabolism; malonyl-CoA biosynthesis; malonyl-CoA from acetyl-CoA: step 1/1. In terms of biological role, component of the acetyl coenzyme A carboxylase (ACC) complex. Biotin carboxylase (BC) catalyzes the carboxylation of biotin on its carrier protein (BCCP) and then the CO(2) group is transferred by the transcarboxylase to acetyl-CoA to form malonyl-CoA. In Arabis hirsuta (Hairy rock-cress), this protein is Acetyl-coenzyme A carboxylase carboxyl transferase subunit beta, chloroplastic.